A 30-amino-acid chain; its full sequence is Ampulexin 3 (30 aa).

Positions 1–17 (MKAIMVLFYVMTLTIIG) are cleaved as a signal peptide.

As to quaternary structure, monomer. Expressed in venom sac and, to a lesser extent, in venom gland. Not expressed in brain.

It localises to the secreted. This Ampulex compressa (Emerald cockroach wasp) protein is Ampulexin 3.